The following is a 164-amino-acid chain: Magnesium-dependent phosphatase 1 (164 aa).

Asp11 functions as the Nucleophile in the catalytic mechanism. Residue Asp11 participates in Mg(2+) binding. Phosphate-binding residues include Leu12 and Asp13. Asp13 contacts Mg(2+). Asp13 functions as the Proton donor in the catalytic mechanism. Trp20 is a binding site for substrate. Positions 69, 70, and 100 each coordinate phosphate. Arg70 lines the substrate pocket. Asp123 is a Mg(2+) binding site.

The protein belongs to the HAD-like hydrolase superfamily. The cofactor is Mg(2+).

The catalysed reaction is O-phospho-L-tyrosyl-[protein] + H2O = L-tyrosyl-[protein] + phosphate. Inhibited by vanadate and zinc, and slightly by calcium. Functionally, magnesium-dependent phosphatase which may act as a tyrosine phosphatase. This is Magnesium-dependent phosphatase 1 (Mdp1) from Mus musculus (Mouse).